A 1280-amino-acid chain; its full sequence is Rho guanine nucleotide exchange factor 10-like protein (1280 aa).

Positions 1–10 (MASSNPPPQP) are enriched in pro residues. The tract at residues 1-94 (MASSNPPPQP…TEAPTVVSNG (94 aa)) is disordered. Acidic residues predominate over residues 26–46 (EVEEDSGEAFEFDDSDEEEDT). Ser40 bears the Phosphoserine mark. Low complexity predominate over residues 78-89 (PAAAPPQTEAPT). 2 positions are modified to phosphotyrosine: Tyr131 and Tyr152. Positions 161 to 202 (PRETEDLGWSSSEFESYSEDSGEETKPEAEPTKHRGSFQPKL) are disordered. Residues 183–193 (EETKPEAEPTK) show a composition bias toward basic and acidic residues. Residue Ser279 is modified to Phosphoserine. A DH domain is found at 314-501 (VRRHILGSIV…ETLAEKLNEQ (188 aa)). Disordered regions lie at residues 1133–1163 (QEEA…HTAR) and 1186–1207 (PLLS…SEED).

In terms of assembly, interacts with RHOA, RHOB and RHOC.

It is found in the cytoplasm. In terms of biological role, acts as a guanine nucleotide exchange factor (GEF) for RHOA, RHOB and RHOC. This Mus musculus (Mouse) protein is Rho guanine nucleotide exchange factor 10-like protein (Arhgef10l).